The chain runs to 232 residues: uncharacterized protein (232 aa).

Residues 1 to 46 are disordered; that stretch reads MNAHNMRGPPGDLAKVVPGSRSGWNEGSRCRQADKGDGQCRNGGRD. The segment covering 28–46 has biased composition (basic and acidic residues); sequence SRCRQADKGDGQCRNGGRD.

This is an uncharacterized protein from Rhizobium meliloti (Ensifer meliloti).